Consider the following 316-residue polypeptide: Probable cell division protein WhiA (316 aa).

A DNA-binding region (H-T-H motif) is located at residues 275-309 (TLKELGEMVASGKISKSGINHRLRKLDEIAEQLRT).

The protein belongs to the WhiA family.

Its subcellular location is the cytoplasm. It localises to the nucleoid. Involved in cell division and chromosome segregation. May influence the activity of FtsZ. Binds DNA, but does not seem to function as a transcription factor. This chain is Probable cell division protein WhiA, found in Bacillus subtilis (strain 168).